Consider the following 424-residue polypeptide: Ankyrin repeat domain-containing protein 61 (424 aa).

7 ANK repeats span residues 80-109 (LSFLPIHLAAKYRKAQSLLCLLEHGADPEA), 113-169 (QGFT…ARVD), 172-201 (HRHCPLHLATIYGTHLVLSILAQNGAQVNA), 205-234 (SSMTPLHMAADILNKEMMQTLIAWGASVNC), 239-278 (TGNTALKLAVSTASSKAGRLLAAGLGCIRLLLVHGAQVNA), 282-311 (DGQAAIHEACFGGREVIINLLLEFEANVNI), and 315-348 (NGESPIHMYLQRGSNIRDTALLARLLFRSYPLRL).

The protein is Ankyrin repeat domain-containing protein 61 (ANKRD61) of Bos taurus (Bovine).